We begin with the raw amino-acid sequence, 1529 residues long: Slit homolog 2 protein (1529 aa).

The signal sequence occupies residues 1–30 (MRGVGWQMLSLSLGLVLAILNKVAPQACPA). The 25-residue stretch at 31–55 (QCSCSGSTVDCHGLALRSVPRNIPR) folds into the LRRNT domain. LRR repeat units lie at residues 56-77 (NTERLDLNGNNITRITKTDFAG), 80-101 (HLRVLQLMENKISTIERGAFQD), 104-125 (ELERLRLNRNHLQLFPELLFLG), 128-149 (KLYRLDLSENQIQAIPRKAFRG), 152-173 (DIKNLQLDYNQISCIEDGAFRA), and 176-197 (DLEVLTLNNNNITRLSVASFNH). Asparagine 66 is a glycosylation site (N-linked (GlcNAc...) asparagine). The N-linked (GlcNAc...) asparagine glycan is linked to asparagine 186. An LRRCT 1 domain is found at 209–259 (NNLYCDCHLAWLSDWLRQRPRVGLYTQCMGPSHLRGHNVAEVQKREFVCSG). Residues 264 to 300 (MAPSCSVLHCPAACTCSNNIVDCRGKGLTEIPTNLPE) enclose the LRRNT 2 domain. Cysteine 277 and cysteine 286 form a disulfide bridge. LRR repeat units lie at residues 301–322 (TITEIRLEQNTIKVIPPGAFSP), 325–346 (KLRRIDLSNNQISELAPDAFQG), 349–370 (SLNSLVLYGNKITELPKSLFEG), 373–394 (SLQLLLLNANKINCLRVDAFQD), and 397–418 (NLNLLSLYDNKLQTIAKGTFSP). Residues 430–480 (NPFICDCHLKWLADYLHTNPIETSGARCTSPRRLANKRIGQIKSKKFRCSA) enclose the LRRCT 2 domain. 4 disulfide bridges follow: cysteine 434-cysteine 457, cysteine 436-cysteine 478, cysteine 506-cysteine 512, and cysteine 510-cysteine 519. An LRRNT 3 domain is found at 497–533 (SGDCFADLACPEKCRCEGTTVDCSNQKLNKIPEHIPQ). 5 LRR repeats span residues 534 to 555 (YTAELRLNNNEFTVLEATGIFK), 559 to 580 (QLRKINFSNNKITDIEEGAFEG), 583 to 604 (GVNEILLTSNRLENVQHKMFKG), 607 to 628 (SLKTLMLRSNRITCVGNDSFIG), and 631 to 652 (SVRLLSLYDNQITTVAPGAFDT). The N-linked (GlcNAc...) asparagine glycan is linked to asparagine 564. N-linked (GlcNAc...) asparagine glycosylation occurs at asparagine 623. An LRRCT 3 domain is found at 664 to 714 (NPFNCNCYLAWLGEWLRKKRIVTGNPRCQKPYFLKEIPIQDVAIQDFTCDD). Cystine bridges form between cysteine 668–cysteine 691, cysteine 670–cysteine 712, cysteine 727–cysteine 733, and cysteine 731–cysteine 740. In terms of domain architecture, LRRNT 4 spans 718 to 754 (DNSCSPLSRCPTECTCLDTVVRCSNKGLKVLPKGIPR). 4 LRR repeats span residues 755–777 (DVTELYLDGNQFTLVPKELSNYK), 778–799 (HLTLIDLSNNRISTLSNQSFSN), 802–823 (QLLTLILSYNRLRCIPPRTFDG), and 826–847 (SLRLLSLHGNDISVVPEGAFND). N-linked (GlcNAc...) asparagine glycans are attached at residues asparagine 794 and asparagine 799. Positions 859–909 (NPLYCDCNMQWLSDWVKSEYKEPGIARCAGPGEMADKLLLTTPSKKFTCQG) constitute an LRRCT 4 domain. Disulfide bonds link cysteine 863-cysteine 886, cysteine 865-cysteine 907, cysteine 922-cysteine 933, cysteine 927-cysteine 943, cysteine 945-cysteine 954, cysteine 961-cysteine 972, cysteine 966-cysteine 984, cysteine 986-cysteine 995, cysteine 1002-cysteine 1013, cysteine 1007-cysteine 1022, cysteine 1024-cysteine 1033, cysteine 1040-cysteine 1053, cysteine 1047-cysteine 1062, cysteine 1064-cysteine 1073, cysteine 1080-cysteine 1091, cysteine 1085-cysteine 1100, cysteine 1102-cysteine 1111, cysteine 1125-cysteine 1136, cysteine 1130-cysteine 1145, and cysteine 1147-cysteine 1156. EGF-like domains are found at residues 918–955 (KCNPCLSNPCKNDGTCNSDPVDFYRCTCPYGFKGQDCD) and 957–996 (PIHACISNPCKHGGTCHLKEGEEDGFWCICADGFEGENCE). An EGF-like 3; calcium-binding domain is found at 998-1034 (NVDDCEDNDCENNSTCVDGINNYTCLCPPEYTGELCE). N-linked (GlcNAc...) asparagine glycans are attached at residues asparagine 1009, asparagine 1010, and asparagine 1019. One can recognise an EGF-like 4 domain in the interval 1036-1074 (KLDFCAQDLNPCQHDSKCILTPKGFKCDCTPGYVGEHCD). The EGF-like 5; calcium-binding domain maps to 1076-1112 (DFDDCQDNKCKNGAHCTDAVNGYTCICPEGYSGLFCE). Residues 1121–1157 (RTSPCDNFDCQNGAQCIVRINEPICQCLPGYQGEKCE) enclose the EGF-like 6 domain. Positions 1160–1333 (VSVNFINKES…PMQTGILPGC (174 aa)) constitute a Laminin G-like domain. N-linked (GlcNAc...) asparagine glycosylation is found at asparagine 1183, asparagine 1266, and asparagine 1300. 14 cysteine pairs are disulfide-bonded: cysteine 1307/cysteine 1333, cysteine 1336/cysteine 1346, cysteine 1341/cysteine 1356, cysteine 1358/cysteine 1367, cysteine 1375/cysteine 1385, cysteine 1380/cysteine 1395, cysteine 1397/cysteine 1406, cysteine 1416/cysteine 1426, cysteine 1421/cysteine 1436, cysteine 1438/cysteine 1447, cysteine 1453/cysteine 1492, cysteine 1471/cysteine 1506, cysteine 1482/cysteine 1522, and cysteine 1486/cysteine 1524. Residues 1332-1368 (GCEPCHKKVCAHGTCQPSSQAGFTCECQEGWMGPLCD) form the EGF-like 7 domain. The 76-residue stretch at 1453 to 1528 (CRGERIRDYY…VVKCGCTRCV (76 aa)) folds into the CTCK domain.

Interacts with GREM1. Homodimer. Binds ROBO1 and ROBO2 with high affinity. In terms of tissue distribution, fetal lung and kidney, and adult spinal cord. Weak expression in adult adrenal gland, thyroid, trachea and other tissues examined.

Its subcellular location is the secreted. Its function is as follows. Thought to act as molecular guidance cue in cellular migration, and function appears to be mediated by interaction with roundabout homolog receptors. During neural development involved in axonal navigation at the ventral midline of the neural tube and projection of axons to different regions. SLIT1 and SLIT2 seem to be essential for midline guidance in the forebrain by acting as repulsive signal preventing inappropriate midline crossing by axons projecting from the olfactory bulb. In spinal cord development may play a role in guiding commissural axons once they reached the floor plate by modulating the response to netrin. In vitro, silences the attractive effect of NTN1 but not its growth-stimulatory effect and silencing requires the formation of a ROBO1-DCC complex. May be implicated in spinal cord midline post-crossing axon repulsion. In vitro, only commissural axons that crossed the midline responded to SLIT2. In the developing visual system appears to function as repellent for retinal ganglion axons by providing a repulsion that directs these axons along their appropriate paths prior to, and after passage through, the optic chiasm. In vitro, collapses and repels retinal ganglion cell growth cones. Seems to play a role in branching and arborization of CNS sensory axons, and in neuronal cell migration. In vitro, Slit homolog 2 protein N-product, but not Slit homolog 2 protein C-product, repels olfactory bulb (OB) but not dorsal root ganglia (DRG) axons, induces OB growth cones collapse and induces branching of DRG axons. Seems to be involved in regulating leukocyte migration. This is Slit homolog 2 protein (SLIT2) from Homo sapiens (Human).